A 36-amino-acid chain; its full sequence is METNDLGFVASLMFVLVPTVFLIVLFIQTNSREGSS.

Residues 7–27 (GFVASLMFVLVPTVFLIVLFI) traverse the membrane as a helical segment.

The protein belongs to the PsbM family. As to quaternary structure, PSII is composed of 1 copy each of membrane proteins PsbA, PsbB, PsbC, PsbD, PsbE, PsbF, PsbH, PsbI, PsbJ, PsbK, PsbL, PsbM, PsbT, PsbX, PsbY, PsbZ, Psb30/Ycf12, peripheral proteins PsbO, CyanoQ (PsbQ), PsbU, PsbV and a large number of cofactors. It forms dimeric complexes.

The protein resides in the cellular thylakoid membrane. Functionally, one of the components of the core complex of photosystem II (PSII). PSII is a light-driven water:plastoquinone oxidoreductase that uses light energy to abstract electrons from H(2)O, generating O(2) and a proton gradient subsequently used for ATP formation. It consists of a core antenna complex that captures photons, and an electron transfer chain that converts photonic excitation into a charge separation. This subunit is found at the monomer-monomer interface. This is Photosystem II reaction center protein M from Synechococcus sp. (strain CC9311).